The following is a 139-amino-acid chain: ATP synthase epsilon chain (139 aa).

The protein belongs to the ATPase epsilon chain family. In terms of assembly, F-type ATPases have 2 components, CF(1) - the catalytic core - and CF(0) - the membrane proton channel. CF(1) has five subunits: alpha(3), beta(3), gamma(1), delta(1), epsilon(1). CF(0) has three main subunits: a, b and c.

Its subcellular location is the cell inner membrane. Produces ATP from ADP in the presence of a proton gradient across the membrane. This Enterobacter sp. (strain 638) protein is ATP synthase epsilon chain.